The following is a 359-amino-acid chain: Fructose-bisphosphate aldolase (359 aa).

Residue Thr11 is modified to Phosphothreonine. Lys27 participates in a covalent cross-link: Glycyl lysine isopeptide (Lys-Gly) (interchain with G-Cter in ubiquitin). Residues Ser56 and Ser63 each carry the phosphoserine modification. D-glyceraldehyde 3-phosphate is bound at residue Ser63. Lys73 is covalently cross-linked (Glycyl lysine isopeptide (Lys-Gly) (interchain with G-Cter in ubiquitin)). Phosphoserine occurs at positions 76 and 83. Residue Lys85 forms a Glycyl lysine isopeptide (Lys-Gly) (interchain with G-Cter in ubiquitin) linkage. Residue Ser96 is modified to Phosphoserine. Residue Asp110 is the Proton donor of the active site. Residues His111 and Asp145 each contribute to the Zn(2+) site. Ser147 carries the post-translational modification Phosphoserine. Thr150 is modified (phosphothreonine). Glu175 is a binding site for Zn(2+). Position 179 is a phosphothreonine (Thr179). A Zn(2+)-binding site is contributed by His227. Gly228 is a binding site for dihydroxyacetone phosphate. His265 is a Zn(2+) binding site. Residues 266–268 (GGS) and 287–290 (NLDT) contribute to the dihydroxyacetone phosphate site. Phosphoserine is present on Ser268. Position 290 is a phosphothreonine (Thr290). A Glycyl lysine isopeptide (Lys-Gly) (interchain with G-Cter in ubiquitin) cross-link involves residue Lys308. A Phosphotyrosine modification is found at Tyr310. Ser313 carries the post-translational modification Phosphoserine.

Belongs to the class II fructose-bisphosphate aldolase family. As to quaternary structure, homodimer. It depends on Zn(2+) as a cofactor.

It carries out the reaction beta-D-fructose 1,6-bisphosphate = D-glyceraldehyde 3-phosphate + dihydroxyacetone phosphate. Its pathway is carbohydrate degradation; glycolysis; D-glyceraldehyde 3-phosphate and glycerone phosphate from D-glucose: step 4/4. Functionally, catalyzes the aldol condensation of dihydroxyacetone phosphate (DHAP or glycerone-phosphate) with glyceraldehyde 3-phosphate (G3P) to form fructose 1,6-bisphosphate (FBP) in gluconeogenesis and the reverse reaction in glycolysis. This is Fructose-bisphosphate aldolase (FBA1) from Saccharomyces cerevisiae (strain ATCC 204508 / S288c) (Baker's yeast).